The sequence spans 414 residues: 26S proteasome regulatory subunit 6B homolog (414 aa).

The interval 1-33 is disordered; sequence MAATMVLDPKPSSTPPPTLPNPYTTDSQSTDSE. Low complexity predominate over residues 21-30; the sequence is NPYTTDSQST. A coiled-coil region spans residues 55-81; sequence EYVKDELKNLKREQLRSQEEVKRIQSV. 202–209 contributes to the ATP binding site; sequence GPPGTGKT.

The protein belongs to the AAA ATPase family.

Its subcellular location is the cytoplasm. It is found in the nucleus. Its function is as follows. The 26S proteasome is involved in the ATP-dependent degradation of ubiquitinated proteins. The regulatory (or ATPase) complex confers ATP dependency and substrate specificity to the 26S complex. The protein is 26S proteasome regulatory subunit 6B homolog of Helianthus annuus (Common sunflower).